The following is a 298-amino-acid chain: Anamorsin homolog (298 aa).

The N-terminal SAM-like domain stretch occupies residues 1–143; sequence MTQLIITHQS…IKAEKPSWKP (143 aa). Positions 143 to 162 are linker; the sequence is PEEGKVLVDDIDLEGSVPDI. 4 residues coordinate [2Fe-2S] cluster: Cys175, Cys182, Cys185, and Cys187. Positions 175–187 are fe-S binding site A; that stretch reads CKSKERACNNCNC. [4Fe-4S] cluster contacts are provided by Cys218, Cys221, Cys229, and Cys232. 2 consecutive short sequence motifs (cx2C motif) follow at residues 218-221 and 229-232; these read CGNC and CSGC. Residues 218–232 are fe-S binding site B; sequence CGNCYLGDAFRCSGC.

It belongs to the anamorsin family. Monomer. The cofactor is [2Fe-2S] cluster. It depends on [4Fe-4S] cluster as a cofactor.

The protein localises to the cytoplasm. It localises to the mitochondrion intermembrane space. In terms of biological role, component of the cytosolic iron-sulfur (Fe-S) protein assembly (CIA) machinery. Required for the maturation of extramitochondrial Fe-S proteins. Part of an electron transfer chain functioning in an early step of cytosolic Fe-S biogenesis, facilitating the de novo assembly of a [4Fe-4S] cluster on the cytosolic Fe-S scaffold complex. Electrons are transferred from NADPH via a FAD- and FMN-containing diflavin oxidoreductase. Together with the diflavin oxidoreductase, also required for the assembly of the diferric tyrosyl radical cofactor of ribonucleotide reductase (RNR), probably by providing electrons for reduction during radical cofactor maturation in the catalytic small subunit. This is Anamorsin homolog from Cryptosporidium parvum (strain Iowa II).